The chain runs to 355 residues: Inositol-tetrakisphosphate 1-kinase 4 (355 aa).

Lys65 contributes to the 1D-myo-inositol 1,3,4-trisphosphate binding site. 2 residues coordinate ATP: Arg101 and Lys146. In terms of domain architecture, ATP-grasp spans 107–318 (VVSGLRTPVS…FFLEMLRGTR (212 aa)). Residues His157 and Lys190 each coordinate 1D-myo-inositol 1,3,4-trisphosphate. Residues 179 to 190 (QEFVNHGGVLFK) and Ser205 each bind ATP. Residues 225–248 (FANISNQPLPPPDDDGGAADDDTP) form a disordered region. The segment covering 236 to 247 (PDDDGGAADDDT) has biased composition (acidic residues). Mg(2+) is bound by residues Asp272, Asp289, and Asn291. Position 291 (Asn291) interacts with 1D-myo-inositol 1,3,4-trisphosphate.

It belongs to the ITPK1 family. Monomer. Mg(2+) serves as cofactor.

It carries out the reaction 1D-myo-inositol 3,4,5,6-tetrakisphosphate + ATP = 1D-myo-inositol 1,3,4,5,6-pentakisphosphate + ADP + H(+). The enzyme catalyses 1D-myo-inositol 1,3,4-trisphosphate + ATP = 1D-myo-inositol 1,3,4,5-tetrakisphosphate + ADP + H(+). It catalyses the reaction 1D-myo-inositol 1,3,4-trisphosphate + ATP = 1D-myo-inositol 1,3,4,6-tetrakisphosphate + ADP + H(+). Functionally, kinase that can phosphorylate various inositol polyphosphate such as Ins(3,4,5,6)P4 or Ins(1,3,4)P3 and participates in phytic acid biosynthesis in developing seeds. Phytic acid is the primary storage form of phosphorus in cereal grains and other plant seeds. In Oryza sativa subsp. indica (Rice), this protein is Inositol-tetrakisphosphate 1-kinase 4 (ITPK4).